The sequence spans 338 residues: Purple acid phosphatase 17 (338 aa).

A signal peptide spans 1–31 (MNSGRRSLMSATASLSLLLCIFTTFVVVSNG). Position 53 (D53) interacts with Fe cation. N61 carries an N-linked (GlcNAc...) asparagine glycan. Residues D86 and Y89 each coordinate Fe cation. D86 serves as a coordination point for Zn(2+). Zn(2+)-binding residues include N124 and H218. The active-site Proton donor is the H227. H253 contributes to the Zn(2+) binding site. 253–255 (HDH) contributes to the substrate binding site. Position 255 (H255) interacts with Fe cation.

The protein belongs to the metallophosphoesterase superfamily. Purple acid phosphatase family. In terms of assembly, homodimer. Requires Fe cation as cofactor. Zn(2+) is required as a cofactor. Expressed in roots, stems, leaves, flowers and siliques.

It localises to the secreted. It carries out the reaction a phosphate monoester + H2O = an alcohol + phosphate. The enzyme catalyses 2 a phenolic donor + H2O2 = 2 a phenolic radical donor + 2 H2O. Inhibited by phosphate and molybdate. In terms of biological role, metallo-phosphoesterase involved in phosphate metabolism. Has a peroxidase activity. The sequence is that of Purple acid phosphatase 17 (PAP17) from Arabidopsis thaliana (Mouse-ear cress).